The sequence spans 95 residues: Co-chaperonin GroES (95 aa).

Belongs to the GroES chaperonin family. In terms of assembly, heptamer of 7 subunits arranged in a ring. Interacts with the chaperonin GroEL.

Its subcellular location is the cytoplasm. Together with the chaperonin GroEL, plays an essential role in assisting protein folding. The GroEL-GroES system forms a nano-cage that allows encapsulation of the non-native substrate proteins and provides a physical environment optimized to promote and accelerate protein folding. GroES binds to the apical surface of the GroEL ring, thereby capping the opening of the GroEL channel. The chain is Co-chaperonin GroES from Desulfotalea psychrophila (strain LSv54 / DSM 12343).